Consider the following 455-residue polypeptide: Phosphoglucosamine mutase (455 aa).

The active-site Phosphoserine intermediate is the Ser-107. Residues Ser-107, Asp-247, Asp-249, and Asp-251 each contribute to the Mg(2+) site. Ser-107 is subject to Phosphoserine.

Belongs to the phosphohexose mutase family. Requires Mg(2+) as cofactor. In terms of processing, activated by phosphorylation.

The enzyme catalyses alpha-D-glucosamine 1-phosphate = D-glucosamine 6-phosphate. Catalyzes the conversion of glucosamine-6-phosphate to glucosamine-1-phosphate. This Leuconostoc citreum (strain KM20) protein is Phosphoglucosamine mutase.